The chain runs to 202 residues: LexA repressor (202 aa).

Positions 28-48 (IAEIARAIGVSSPHGVREQLR) form a DNA-binding region, H-T-H motif. Residues Ser-120 and Lys-157 each act as for autocatalytic cleavage activity in the active site.

This sequence belongs to the peptidase S24 family. As to quaternary structure, homodimer.

The catalysed reaction is Hydrolysis of Ala-|-Gly bond in repressor LexA.. Its function is as follows. Represses a number of genes involved in the response to DNA damage (SOS response), including recA and lexA. In the presence of single-stranded DNA, RecA interacts with LexA causing an autocatalytic cleavage which disrupts the DNA-binding part of LexA, leading to derepression of the SOS regulon and eventually DNA repair. This chain is LexA repressor, found in Methylococcus capsulatus (strain ATCC 33009 / NCIMB 11132 / Bath).